Reading from the N-terminus, the 469-residue chain is SHC-transforming protein 1 (469 aa).

Residues 1-26 (MNKLSGGGGRRTRVEGGQLGGEEWTR) form a disordered region. Position 29 is a phosphoserine (S29). K44 is modified (N6-acetyllysine). The 184-residue stretch at 46 to 229 (MGPGVSYLVR…AGFDGSAWDE (184 aa)) folds into the PID domain. Residues 230–373 (EEEELPDHQY…SMAEQLQGES (144 aa)) are CH1. Phosphotyrosine is present on residues Y239, Y240, and Y313. Residues 322–344 (ARQAGGGAGPPNPSVNGSAPRDL) are disordered. S339 bears the Phosphoserine mark. The region spanning 374–465 (WFHGKLSRRE…GSELCLQQPV (92 aa)) is the SH2 domain.

As to quaternary structure, interacts with CPNE3; this interaction may mediate the binding of CPNE3 with ERBB2. Interacts with the NPXY motif of tyrosine-phosphorylated IGF1R and INSR in vitro via the PID domain. Once activated, binds to GRB2. Interacts with tyrosine-phosphorylated CD3T and DDR2. Interacts with the N-terminal region of APS. Interacts with phosphorylated LRP1 and IRS4. Interacts with INPP5D/SHIP1 and INPPL1/SHIP2. Interacts with ALK, GAB2, GRB7 and KIT. Interacts with PTPN6/SHP (tyrosine phosphorylated). Identified in a complex containing FGFR4, NCAM1, CDH2, PLCG1, FRS2A, SRC, SHC1, GAP43 and CTTN. Interacts with EPHB1 and GRB2; activates the MAPK/ERK cascade to regulate cell migration. Interacts with PDGFRB (tyrosine-phosphorylated). Interacts with ERBB4. Interacts with TEK/TIE2 (tyrosine-phosphorylated). Interacts with PTK2/FAK1. Interacts with FLT4 (tyrosine-phosphorylated). Interacts with the Trk receptors NTRK1, NTRK2 and NTRK3; in a phosphotyrosine-dependent manner. Interacts with CEACAM1; this interaction is CEACAM1-phosphorylation-dependent and mediates interaction with EGFR or INSR resulting in decrease coupling of SHC1 to the MAPK3/ERK1-MAPK1/ERK2 pathway. Interacts (via PID domain) with PEAK1 (when phosphorylated). Found in a complex with PPP1CA, PPP1CC, SHC1 and PEAK1. Phosphorylated by activated epidermal growth factor receptor. Phosphorylated in response to KIT signaling. Tyrosine phosphorylated in response to FLT3 signaling and by ligand-activated ALK. Tyrosine phosphorylated by TEK/TIE2. Tyrosine phosphorylated by ligand-activated PDGFRB. May be tyrosine phosphorylated by activated PTK2/FAK1. Dephosphorylation by PTPN2 may regulate interaction with GRB2. Phosphorylated in response to FLT4 signaling. Tyrosine phosphorylated by activated PTK2B/PYK2.

Its subcellular location is the cytoplasm. It is found in the cell junction. The protein localises to the focal adhesion. Functionally, signaling adapter that couples activated growth factor receptors to signaling pathways. Participates in a signaling cascade initiated by activated KIT and KITLG/SCF. Participates in signaling downstream of the angiopoietin receptor TEK/TIE2, and plays a role in the regulation of endothelial cell migration and sprouting angiogenesis. The protein is SHC-transforming protein 1 (Shc1) of Rattus norvegicus (Rat).